Consider the following 128-residue polypeptide: Small ribosomal subunit protein uS11 (128 aa).

This sequence belongs to the universal ribosomal protein uS11 family. In terms of assembly, part of the 30S ribosomal subunit. Interacts with proteins S7 and S18. Binds to IF-3.

In terms of biological role, located on the platform of the 30S subunit, it bridges several disparate RNA helices of the 16S rRNA. Forms part of the Shine-Dalgarno cleft in the 70S ribosome. This chain is Small ribosomal subunit protein uS11, found in Wolbachia pipientis wMel.